The chain runs to 243 residues: 3-deoxy-manno-octulosonate cytidylyltransferase (243 aa).

It belongs to the KdsB family.

It is found in the cytoplasm. It carries out the reaction 3-deoxy-alpha-D-manno-oct-2-ulosonate + CTP = CMP-3-deoxy-beta-D-manno-octulosonate + diphosphate. Its pathway is nucleotide-sugar biosynthesis; CMP-3-deoxy-D-manno-octulosonate biosynthesis; CMP-3-deoxy-D-manno-octulosonate from 3-deoxy-D-manno-octulosonate and CTP: step 1/1. The protein operates within bacterial outer membrane biogenesis; lipopolysaccharide biosynthesis. Functionally, activates KDO (a required 8-carbon sugar) for incorporation into bacterial lipopolysaccharide in Gram-negative bacteria. The sequence is that of 3-deoxy-manno-octulosonate cytidylyltransferase from Bartonella henselae (strain ATCC 49882 / DSM 28221 / CCUG 30454 / Houston 1) (Rochalimaea henselae).